The primary structure comprises 122 residues: MIQQETRLHVADNTGAKELLAIRVLGGSKRRYAGIGDVIVASVKDAIPGGSVKKGDVVKAVVVRTVKEHRRVDGSYIKFDENAAVILGSGREPKGTRIFGPVGRELRDKRFMKIVSLAPEVI.

The protein belongs to the universal ribosomal protein uL14 family. As to quaternary structure, part of the 50S ribosomal subunit. Forms a cluster with proteins L3 and L19. In the 70S ribosome, L14 and L19 interact and together make contacts with the 16S rRNA in bridges B5 and B8.

Binds to 23S rRNA. Forms part of two intersubunit bridges in the 70S ribosome. This chain is Large ribosomal subunit protein uL14, found in Bifidobacterium adolescentis (strain ATCC 15703 / DSM 20083 / NCTC 11814 / E194a).